We begin with the raw amino-acid sequence, 256 residues long: Pimeloyl-[acyl-carrier protein] methyl ester esterase (256 aa).

Residues 15–242 enclose the AB hydrolase-1 domain; it reads HLVLLHGWGL…AAHAPFISHP (228 aa). Residues Trp22, 82 to 83, and 143 to 147 each bind substrate; these read SL and FLALQ. The Nucleophile role is filled by Ser82. Active-site residues include Asp207 and His235. His235 is a substrate binding site.

The protein belongs to the AB hydrolase superfamily. Carboxylesterase BioH family. Monomer.

Its subcellular location is the cytoplasm. The enzyme catalyses 6-carboxyhexanoyl-[ACP] methyl ester + H2O = 6-carboxyhexanoyl-[ACP] + methanol + H(+). Its pathway is cofactor biosynthesis; biotin biosynthesis. Its function is as follows. The physiological role of BioH is to remove the methyl group introduced by BioC when the pimeloyl moiety is complete. It allows to synthesize pimeloyl-ACP via the fatty acid synthetic pathway through the hydrolysis of the ester bonds of pimeloyl-ACP esters. This chain is Pimeloyl-[acyl-carrier protein] methyl ester esterase, found in Shigella boydii serotype 4 (strain Sb227).